The following is a 692-amino-acid chain: Elongation factor G (692 aa).

The tr-type G domain maps to 9-284 (HMVRNIGIAA…AVVDYLPAPD (276 aa)). GTP contacts are provided by residues 18 to 25 (AHIDAGKT), 82 to 86 (DTPGH), and 136 to 139 (NKMD).

This sequence belongs to the TRAFAC class translation factor GTPase superfamily. Classic translation factor GTPase family. EF-G/EF-2 subfamily.

Its subcellular location is the cytoplasm. Its function is as follows. Catalyzes the GTP-dependent ribosomal translocation step during translation elongation. During this step, the ribosome changes from the pre-translocational (PRE) to the post-translocational (POST) state as the newly formed A-site-bound peptidyl-tRNA and P-site-bound deacylated tRNA move to the P and E sites, respectively. Catalyzes the coordinated movement of the two tRNA molecules, the mRNA and conformational changes in the ribosome. In Campylobacter curvus (strain 525.92), this protein is Elongation factor G.